Reading from the N-terminus, the 464-residue chain is Aspartyl protease 37 (464 aa).

Residues 1 to 19 (MNAAVLLLLLALAALPASC) form the signal peptide. An N-linked (GlcNAc...) asparagine glycan is attached at Asn-41. A Peptidase A1 domain is found at 89–456 (YLVKLGIGTP…NLRRGRVTFV (368 aa)). The active site involves Asp-107. Cys-117 and Cys-123 form a disulfide bridge. Residues Asn-174 and Asn-261 are each glycosylated (N-linked (GlcNAc...) asparagine). Residues 299–311 (TTTTTATATATAP) show a composition bias toward low complexity. A disordered region spans residues 299-319 (TTTTTATATATAPAPAPTPSP). Residue Asn-320 is glycosylated (N-linked (GlcNAc...) asparagine). Asp-337 is an active-site residue. Cys-376 and Cys-420 are disulfide-bonded.

Belongs to the peptidase A1 family.

Its function is as follows. Anther-specific aspartic protease involved in tapetal programmed cell death (PCD). Directly regulated by the transcription factor EAT1/DTD in anthers during tapetum PCD and degeneration. The protein is Aspartyl protease 37 of Oryza sativa subsp. japonica (Rice).